The following is a 316-amino-acid chain: UDP-N-acetylenolpyruvoylglucosamine reductase (316 aa).

One can recognise an FAD-binding PCMH-type domain in the interval V30–G194. R173 is an active-site residue. S223 serves as the catalytic Proton donor. E293 is an active-site residue.

The protein belongs to the MurB family. It depends on FAD as a cofactor.

The protein localises to the cytoplasm. It carries out the reaction UDP-N-acetyl-alpha-D-muramate + NADP(+) = UDP-N-acetyl-3-O-(1-carboxyvinyl)-alpha-D-glucosamine + NADPH + H(+). The protein operates within cell wall biogenesis; peptidoglycan biosynthesis. In terms of biological role, cell wall formation. The sequence is that of UDP-N-acetylenolpyruvoylglucosamine reductase from Streptococcus pneumoniae serotype 19F (strain G54).